The sequence spans 660 residues: Leucine-rich repeat transmembrane protein FLRT2 (660 aa).

The N-terminal stretch at 1–35 (MGLQTTKWPSHGAFFLKSWLIISLGLYSQVSKLLA) is a signal peptide. 2 cysteine pairs are disulfide-bonded: Cys-36–Cys-42 and Cys-40–Cys-49. In terms of domain architecture, LRRNT spans 36 to 63 (CPSVCRCDRNFVYCNERSLTSVPLGIPE). The Extracellular portion of the chain corresponds to 36 to 541 (CPSVCRCDRN…TTSHSMGSPF (506 aa)). 10 LRR repeats span residues 64–85 (GVTV…AELH), 89–109 (SVHT…NLPK), 110–131 (NVRV…ALAQ), 134–155 (KLEE…DGAF), 160–181 (SLKL…LPVD), 182–202 (LQEL…AFQN), 205–225 (SLER…AEGT), 231–252 (KLKE…LPGT), 253–274 (HLIR…AFSN), and 277–298 (KLER…VFDN). The N-linked (GlcNAc...) asparagine glycan is linked to Asn-202. A glycan (N-linked (GlcNAc...) asparagine) is linked at Asn-298. Residues 310–362 (NPWFCDCSIKWVTEWLKYIPSSLNVRGFMCQGPEQVRGMAVRELNMNLLSCPT) form the LRRCT domain. 2 disulfides stabilise this stretch: Cys-314-Cys-339 and Cys-316-Cys-360. Over residues 373–409 (APSTASPTTQPPTLSIPNPSRSYTPPTPTTSKLPTIP) the composition is skewed to low complexity. The tract at residues 373 to 413 (APSTASPTTQPPTLSIPNPSRSYTPPTPTTSKLPTIPDWDG) is disordered. The region spanning 419–517 (PPISERIQLS…ICSEATTHAS (99 aa)) is the Fibronectin type-III domain. Residues Asn-433 and Asn-521 are each glycosylated (N-linked (GlcNAc...) asparagine). The chain crosses the membrane as a helical span at residues 542–562 (LLAGLIGGAVIFVLVVLLSVF). Residues 563–660 (CWHMHKKGRY…SVPDLEHCHT (98 aa)) are Cytoplasmic-facing.

As to quaternary structure, self-associates (via leucine-rich repeats), giving rise to homooligomers. Interacts with FGFR1. Interacts with FGFR2. Interacts (via extracellular domain) with ADGRL1/LPHN1. Interacts (via extracellular domain) with ADGRL3 (via olfactomedin-like domain). Interacts (via extracellular domain) with UNC5D (via the first Ig-like domain). Can also interact (via extracellular domain) with UNC5B, but with much lower affinity. Interacts (via extracellular domain) with FN1. N-glycosylated. Post-translationally, proteolytic cleavage in the juxtamembrane region gives rise to a soluble ectodomain. Cleavage is probably effected by a metalloprotease. As to expression, expressed in pancreas, skeletal muscle, brain, and heart.

It is found in the cell membrane. The protein localises to the endoplasmic reticulum membrane. It localises to the cell junction. The protein resides in the focal adhesion. Its subcellular location is the secreted. It is found in the extracellular space. The protein localises to the extracellular matrix. It localises to the microsome membrane. The protein resides in the synapse. Its subcellular location is the synaptosome. Functions in cell-cell adhesion, cell migration and axon guidance. Mediates cell-cell adhesion via its interactions with ADGRL3 and probably also other latrophilins that are expressed at the surface of adjacent cells. May play a role in the migration of cortical neurons during brain development via its interaction with UNC5D. Mediates axon growth cone collapse and plays a repulsive role in neuron guidance via its interaction with UNC5D, and possibly also other UNC-5 family members. Plays a role in fibroblast growth factor-mediated signaling cascades. Required for normal organization of the cardiac basement membrane during embryogenesis, and for normal embryonic epicardium and heart morphogenesis. The protein is Leucine-rich repeat transmembrane protein FLRT2 (FLRT2) of Homo sapiens (Human).